The chain runs to 496 residues: Probable malate:quinone oxidoreductase (496 aa).

This sequence belongs to the MQO family. It depends on FAD as a cofactor.

The enzyme catalyses (S)-malate + a quinone = a quinol + oxaloacetate. It participates in carbohydrate metabolism; tricarboxylic acid cycle; oxaloacetate from (S)-malate (quinone route): step 1/1. The protein is Probable malate:quinone oxidoreductase of Prochlorococcus marinus (strain NATL1A).